The following is a 334-amino-acid chain: Malate dehydrogenase, cytoplasmic (334 aa).

Serine 2 bears the N-acetylserine mark. Residues 11-17 (GAAGQIA) and aspartate 42 each bind NAD(+). Substrate contacts are provided by arginine 92 and arginine 98. Residue asparagine 105 coordinates NAD(+). Lysine 110 carries the post-translational modification N6-succinyllysine. Glutamine 112 provides a ligand contact to NAD(+). N6-acetyllysine is present on residues lysine 118 and lysine 121. 129 to 131 (VGN) contacts NAD(+). 2 residues coordinate substrate: asparagine 131 and arginine 162. Histidine 187 acts as the Proton acceptor in catalysis. The residue at position 214 (lysine 214) is an N6-succinyllysine. A Phosphoserine modification is found at serine 217. Arginine 230 is subject to Omega-N-methylarginine. Position 241 is a phosphoserine (serine 241). Residue lysine 298 is modified to N6-acetyllysine; alternate. The residue at position 298 (lysine 298) is an N6-succinyllysine; alternate. Phosphoserine is present on serine 309. Lysine 318 carries the N6-succinyllysine modification. 2 positions are modified to phosphoserine: serine 332 and serine 333.

It belongs to the LDH/MDH superfamily. MDH type 2 family. Homodimer. In terms of processing, ISGylated. Post-translationally, acetylation at Lys-118 dramatically enhances enzymatic activity and promotes adipogenic differentiation.

It localises to the cytoplasm. Its subcellular location is the cytosol. It carries out the reaction (S)-malate + NAD(+) = oxaloacetate + NADH + H(+). The catalysed reaction is (2R)-2-hydroxy-3-(4-hydroxyphenyl)propanoate + NAD(+) = 3-(4-hydroxyphenyl)pyruvate + NADH + H(+). It catalyses the reaction (S)-2-hydroxyglutarate + NAD(+) = 2-oxoglutarate + NADH + H(+). Its function is as follows. Catalyzes the reduction of aromatic alpha-keto acids in the presence of NADH. Plays essential roles in the malate-aspartate shuttle and the tricarboxylic acid cycle, important in mitochondrial NADH supply for oxidative phosphorylation. Catalyzes the reduction of 2-oxoglutarate to 2-hydroxyglutarate, leading to elevated reactive oxygen species (ROS). This is Malate dehydrogenase, cytoplasmic (Mdh1) from Rattus norvegicus (Rat).